The chain runs to 100 residues: Putative exopolysaccharide production repressor protein y4xQ (100 aa).

The next 2 membrane-spanning stretches (helical) occupy residues 9–29 and 35–55; these read ILWL…GSIS and TMVG…FLLW. The tract at residues 66–100 is disordered; sequence TTGQFHGEEQPGDPRIAGTHGRTDGDPCFEDEDSR.

To Rhizobium exopolysaccharide production repressor protein (ExoX).

Its subcellular location is the cell membrane. Functionally, could be involved in the inhibition of exopolysaccharide synthesis (EPS) and nodulation ability (nod). This Sinorhizobium fredii (strain NBRC 101917 / NGR234) protein is Putative exopolysaccharide production repressor protein y4xQ.